Here is a 143-residue protein sequence, read N- to C-terminus: Transcriptional regulator MraZ (143 aa).

SpoVT-AbrB domains lie at 5-47 and 76-119; these read EYSH…PMPV and AMEA…SDEN.

The protein belongs to the MraZ family. Forms oligomers.

It localises to the cytoplasm. Its subcellular location is the nucleoid. The sequence is that of Transcriptional regulator MraZ from Leuconostoc citreum (strain KM20).